A 271-amino-acid chain; its full sequence is Thioredoxin-related transmembrane protein 2 homolog (271 aa).

The first 28 residues, 1-28 (MTWKKQMALLAKPYYWVNILLAISYLLA), serve as a signal peptide directing secretion. At 29 to 102 (KKTQFICTRL…AILWAYADFR (74 aa)) the chain is on the extracellular side. The helical transmembrane segment at 103–123 (YGLGFLLLCVLVGMVLPEPSY) threads the bilayer. One can recognise a Thioredoxin domain in the interval 112–262 (VLVGMVLPEP…YKEAIERLPI (151 aa)). Residues 124-271 (RGPEHITYFR…IAPKEAKKVQ (148 aa)) lie on the Cytoplasmic side of the membrane. Residues 268–271 (KKVQ) carry the Di-lysine motif motif.

It localises to the membrane. The polypeptide is Thioredoxin-related transmembrane protein 2 homolog (Drosophila melanogaster (Fruit fly)).